A 227-amino-acid chain; its full sequence is UPF0173 metal-dependent hydrolase BC_4613 (227 aa).

This sequence belongs to the UPF0173 family.

The chain is UPF0173 metal-dependent hydrolase BC_4613 from Bacillus cereus (strain ATCC 14579 / DSM 31 / CCUG 7414 / JCM 2152 / NBRC 15305 / NCIMB 9373 / NCTC 2599 / NRRL B-3711).